The chain runs to 26 residues: GIKDYLKKLLQKAINKIKSLRKKQDA.

Expressed by the venom gland.

The protein localises to the secreted. Its function is as follows. May have cytolytic and antimicrobial activity. This is Oxyopinin-3a from Oxyopes takobius (Lynx spider).